Reading from the N-terminus, the 58-residue chain is Small ribosomal subunit protein bS21 (58 aa).

The protein belongs to the bacterial ribosomal protein bS21 family.

The protein is Small ribosomal subunit protein bS21 of Latilactobacillus sakei subsp. sakei (strain 23K) (Lactobacillus sakei subsp. sakei).